The chain runs to 331 residues: Phenylalanine--tRNA ligase alpha subunit (331 aa).

A Mg(2+)-binding site is contributed by E252.

This sequence belongs to the class-II aminoacyl-tRNA synthetase family. Phe-tRNA synthetase alpha subunit type 1 subfamily. As to quaternary structure, tetramer of two alpha and two beta subunits. It depends on Mg(2+) as a cofactor.

It is found in the cytoplasm. It carries out the reaction tRNA(Phe) + L-phenylalanine + ATP = L-phenylalanyl-tRNA(Phe) + AMP + diphosphate + H(+). The chain is Phenylalanine--tRNA ligase alpha subunit from Xanthomonas euvesicatoria pv. vesicatoria (strain 85-10) (Xanthomonas campestris pv. vesicatoria).